A 188-amino-acid chain; its full sequence is Aspartic protease inhibitor 11 (188 aa).

An N-linked (GlcNAc...) asparagine glycan is attached at N19. 3 disulfide bridges follow: C48-C93, C142-C159, and C150-C153.

This sequence belongs to the protease inhibitor I3 (leguminous Kunitz-type inhibitor) family.

The protein localises to the vacuole. In terms of biological role, inhibitor of cathepsin D (aspartic protease) and trypsin (serine protease). May protect the plant by inhibiting proteases of invading organisms. The polypeptide is Aspartic protease inhibitor 11 (Solanum tuberosum (Potato)).